A 397-amino-acid chain; its full sequence is Elongation factor Tu 1 (397 aa).

A tr-type G domain is found at 10 to 206; the sequence is KPHVNIGTIG…AVDENIPQPE (197 aa). The G1 stretch occupies residues 19 to 26; it reads GHIDHGKT. 19 to 26 serves as a coordination point for GTP; it reads GHIDHGKT. Thr-26 contacts Mg(2+). A G2 region spans residues 62–66; sequence GITIS. Positions 83-86 are G3; it reads DCPG. GTP contacts are provided by residues 83 to 87 and 138 to 141; these read DCPGH and NKAD. The G4 stretch occupies residues 138–141; it reads NKAD. Residues 176–178 form a G5 region; sequence SAL.

This sequence belongs to the TRAFAC class translation factor GTPase superfamily. Classic translation factor GTPase family. EF-Tu/EF-1A subfamily. Monomer.

The protein resides in the cytoplasm. The enzyme catalyses GTP + H2O = GDP + phosphate + H(+). Functionally, GTP hydrolase that promotes the GTP-dependent binding of aminoacyl-tRNA to the A-site of ribosomes during protein biosynthesis. This chain is Elongation factor Tu 1, found in Streptomyces avermitilis (strain ATCC 31267 / DSM 46492 / JCM 5070 / NBRC 14893 / NCIMB 12804 / NRRL 8165 / MA-4680).